Consider the following 475-residue polypeptide: Glycogen synthase (475 aa).

K15 contributes to the ADP-alpha-D-glucose binding site.

It belongs to the glycosyltransferase 1 family. Bacterial/plant glycogen synthase subfamily.

The catalysed reaction is [(1-&gt;4)-alpha-D-glucosyl](n) + ADP-alpha-D-glucose = [(1-&gt;4)-alpha-D-glucosyl](n+1) + ADP + H(+). It functions in the pathway glycan biosynthesis; glycogen biosynthesis. In terms of biological role, synthesizes alpha-1,4-glucan chains using ADP-glucose. The polypeptide is Glycogen synthase (Chlamydia felis (strain Fe/C-56) (Chlamydophila felis)).